The following is a 70-amino-acid chain: Small ribosomal subunit protein bS21 (70 aa).

Belongs to the bacterial ribosomal protein bS21 family.

This chain is Small ribosomal subunit protein bS21, found in Polynucleobacter asymbioticus (strain DSM 18221 / CIP 109841 / QLW-P1DMWA-1) (Polynucleobacter necessarius subsp. asymbioticus).